Reading from the N-terminus, the 107-residue chain is Dispanin subfamily A member 2b (107 aa).

Over 1 to 31 (MEYRTDQVPMSPRSVQGAPGTLPIRDHLPWS) the chain is Extracellular. Residues 32 to 52 (IFNLFYMNVCCLGLTAMIFSV) form a helical membrane-spanning segment. Residues Cys41 and Cys42 are each lipidated (S-palmitoyl cysteine). The Cytoplasmic segment spans residues 53–77 (KSRDRKVVGDVEGARHYGSTARSLN). The chain crosses the membrane as a helical span at residues 78-98 (IAATVLGILLIIILIGLAATG). The Extracellular segment spans residues 99–107 (TIQALKYKG).

Belongs to the CD225/Dispanin family. Expressed various cell types in torpedo electric organ and muscle, especially fibroblasts, capillary endothelial cells, and axonal cuff cells.

Its subcellular location is the cell membrane. This chain is Dispanin subfamily A member 2b, found in Torpedo marmorata (Marbled electric ray).